Reading from the N-terminus, the 84-residue chain is Small ribosomal subunit protein uS17 (84 aa).

This sequence belongs to the universal ribosomal protein uS17 family. In terms of assembly, part of the 30S ribosomal subunit.

In terms of biological role, one of the primary rRNA binding proteins, it binds specifically to the 5'-end of 16S ribosomal RNA. The chain is Small ribosomal subunit protein uS17 from Clostridium beijerinckii (strain ATCC 51743 / NCIMB 8052) (Clostridium acetobutylicum).